Reading from the N-terminus, the 176-residue chain is MKVLRCLVCSFYIIVSLITTMTIGTPSMPAINTQTLYLAGHSSKLFERNVGCVKTRYLNQTGDWVTRSLIYVFTFDTEPWVTQAGAFQVKWEPYSPLLRVKASDYVRDNLGAKPDYFIRTYDNDFLLLSDLKEVRSTCSLWVTLKYVDRIPETINRTFYTICPDPVPVPFDERCYP.

A signal peptide spans 1-24 (MKVLRCLVCSFYIIVSLITTMTIG). E47 is a cholesterol binding site. 2 cysteine pairs are disulfide-bonded: C52-C174 and C138-C162. N59 and N155 each carry an N-linked (GlcNAc...) asparagine glycan.

Belongs to the calycin superfamily. Lipocalin family. As to quaternary structure, homodimer; non-disulfide-linked. Each monomer accommodates one molecule of cholesterol in a pocket. In terms of tissue distribution, expressed in salivary glands.

It is found in the secreted. In terms of biological role, salivary tick protein that modulates host immune response. This protein blocks dendritic cell (DC) differentiation from monocytes. In addition, it inhibits up-regulation of costimulatory molecules and pro-inflammatory cytokines in response to stimuli and promotes up-regulation of co-inhibitory molecules and the anti-inflammatory cytokine interleukin-10. It has a pocket to accomodate cholesterol, which may have immune-modulatory roles, either directly or through interactions with the host gut microbiota. The protein is Japanin of Rhipicephalus appendiculatus (Brown ear tick).